The following is a 544-amino-acid chain: High affinity immunoglobulin alpha and immunoglobulin mu Fc receptor (544 aa).

Positions 1 to 16 (MPLFLILCLLQGSSFA) are cleaved as a signal peptide. Topologically, residues 17–462 (LPQKRPHPRW…TFPEDESSSR (446 aa)) are extracellular. One can recognise an Ig-like V-type domain in the interval 61–169 (PNALKGSRLV…NMLFLSMNLT (109 aa)). The segment at 75-97 (GGAVTIQCHYAPSSVNRHQRKYW) is mediates immunoglobulin Fc fragment-binding. Residues Cys-82 and Cys-153 are joined by a disulfide bond. An N-linked (GlcNAc...) asparagine glycan is attached at Asn-167. The tract at residues 218–325 (DTVASTPGTS…TTKADRPRED (108 aa)) is disordered. Composition is skewed to polar residues over residues 220-232 (VAST…TTAS) and 280-291 (ASKSRSMSNTTE). Over residues 307-325 (ASKDRREITTTKADRPRED) the composition is skewed to basic and acidic residues. Residues 463–483 (TLAPVSTMLALFMLMALVLLQ) traverse the membrane as a helical segment. Residues 484–544 (RKLRRRRTSQ…LTAPERNPGP (61 aa)) are Cytoplasmic-facing. Positions 511-544 (PQPDQLPHVERKMLQDDSLPAGASLTAPERNPGP) are disordered.

As to quaternary structure, interacts with IGHM; this interaction facilitates the endocytosis of IgM-coated microbes or IgM-antigen immune complexes. N-glycosylated.

It is found in the cell membrane. Functions as a receptor for the Fc fragment of IgA and IgM. Binds IgA and IgM with high affinity and mediates their endocytosis. May function in the immune response to microbes mediated by IgA and IgM. The sequence is that of High affinity immunoglobulin alpha and immunoglobulin mu Fc receptor (FCAMR) from Pongo abelii (Sumatran orangutan).